Consider the following 319-residue polypeptide: Polyprenyl transferase macG (319 aa).

Transmembrane regions (helical) follow at residues 28 to 45, 48 to 68, 106 to 126, 127 to 147, 152 to 172, 182 to 202, 224 to 244, 249 to 269, and 289 to 309; these read AWLC…AAGM, VSLE…SVTA, AVVA…GTLG, PAVM…PFMK, FPQV…WVGI, ALPL…FYAT, VQIL…VTAL, SLIF…WHIL, and LGLY…VYDI.

This sequence belongs to the UbiA prenyltransferase family. Mg(2+) is required as a cofactor.

Its subcellular location is the membrane. The protein operates within secondary metabolite biosynthesis; terpenoid biosynthesis. Its function is as follows. Polyprenyl transferase; part of the gene cluster that mediates the biosynthesis of macrophorins, isoprenoid epoxycyclohexenones containing cyclized drimane moieties. The first step of the pathway is the synthesis of 6-methylsalicylic acid (6-MSA) by the polyketide synthase macA. 6-MSA is then converted to m-cresol by the decarboxylase macB. The cytochrome P450 monooxygenase macC then catalyzes the oxidation of m-cresol to toluquinol. Epoxidation of toluquinol is then performed by the short chain dehydrogenase macD, with the help of macE, and a further prenylation by macG leads to 7-deacetoxyyanuthone A. The next step is the hydroxylation of C-22 of 7-deacetoxyyanuthone A by the cytochrome P450 monooxygenase macH to yield 22-deacetylyanuthone A. O-Mevalon transferase macI then attaches mevalon to the hydroxyl group of 22-deacetylyanuthone A to produce yanuthone E. The terpene cyclase macJ catalyzes the cyclization of 22-deacetylyanuthone A to macrophorin A. MacJ is also able to catalyze cyclization of yanuthone E and 7-deacetoxyyanuthone A to their corresponding macrophorins. The macJ products can be further modified by macH and macJ, as well as by the FAD-dependent monooxygenase macF, to produce additional macrophorins, including 4'-oxomacrophorin A, 4'-oxomacrophorin D and 4'-oxomacrophorin E. This is Polyprenyl transferase macG from Penicillium terrestre.